We begin with the raw amino-acid sequence, 727 residues long: Zinc metalloproteinase nas-38 (727 aa).

A signal peptide spans 1 to 25; the sequence is MPSPSYNRHIIIASCFCCLLIFSSA. The propeptide occupies 26 to 114; the sequence is ARVPKASKKH…FTQGKREKRK (89 aa). The Peptidase M12A domain maps to 113-312; sequence RKIGRNPLYK…QAINMAYGCT (200 aa). Intrachain disulfides connect Cys158–Cys311 and Cys179–Cys199. His207 is a binding site for Zn(2+). Residue Glu208 is part of the active site. His211 and His217 together coordinate Zn(2+). The region spanning 306 to 345 is the EGF-like domain; the sequence is NMAYGCTESCADLPCLRNGYTHPNNCSMCACPEGLSGRYC. Asn330 carries an N-linked (GlcNAc...) asparagine glycan. The region spanning 353 to 469 is the CUB domain; the sequence is AQCGGVIFAT…AGFKAKFWSN (117 aa). Intrachain disulfides connect Cys355-Cys383 and Cys411-Cys432. 2 disordered regions span residues 473 to 506 and 532 to 561; these read PEGV…QSTT and TPLT…TEPS. Positions 535-554 are enriched in low complexity; sequence TSSSTTTESTTVSSTTQSTT. The 49-residue stretch at 610–658 folds into the TSP type-1 domain; it reads ECGCGAWSEWQGECSQQCGGCGHRLRKRECKKEACRKEEKRPCNFSACP. Intrachain disulfides connect Cys611–Cys644, Cys623–Cys652, Cys627–Cys657, and Cys639–Cys644. N-linked (GlcNAc...) asparagine glycosylation is found at Asn653 and Asn714.

Zn(2+) is required as a cofactor. In terms of tissue distribution, expressed in the epidermis, the excretory canal cell, duct cell, pore cell, and excretory gland cell. Expressed in an oscillating pattern in epithelial cells with increased expression during the lethargus phase which occurs during molting between larval and adult stages. Not expressed in seam cells or in the RIS neuron.

It is found in the secreted. Its function is as follows. Metalloprotease. As part of the innate immune response to molting and injury to the adult epidermis, positively regulates the activity of the transcription factor sta-2 to promote the expression of epidermal antimicrobial peptides such as nlp-29. Through regulating the expression of epidermal antimicrobial peptides such as nlp-29, modulates sleep duration and locomotion quiescence during the sleep-like state called lethargus which occurs during molting between larval and adult stages. This may occur through the sleep-active RIS neuron. The protein is Zinc metalloproteinase nas-38 of Caenorhabditis elegans.